The primary structure comprises 520 residues: Probable helicase MJECL08 (520 aa).

Residues R162, 171 to 176 (GAGKSN), and 501 to 502 (KI) contribute to the ATP site.

It belongs to the HerA family.

The enzyme catalyses Couples ATP hydrolysis with the unwinding of duplex DNA at the replication fork by translocating in the 5'-3' direction. This creates two antiparallel DNA single strands (ssDNA). The leading ssDNA polymer is the template for DNA polymerase III holoenzyme which synthesizes a continuous strand.. The catalysed reaction is ATP + H2O = ADP + phosphate + H(+). It carries out the reaction Couples ATP hydrolysis with the unwinding of duplex DNA by translocating in the 3'-5' direction.. In terms of biological role, a probably bidirectional DNA helicase. This is Probable helicase MJECL08 from Methanocaldococcus jannaschii (strain ATCC 43067 / DSM 2661 / JAL-1 / JCM 10045 / NBRC 100440) (Methanococcus jannaschii).